The following is a 495-amino-acid chain: Cysteine--tRNA ligase (495 aa).

Zn(2+) is bound at residue cysteine 29. Positions 31–41 (PTVYDYGHIGN) match the 'HIGH' region motif. 3 residues coordinate Zn(2+): cysteine 211, histidine 236, and glutamate 240. Residues 268–272 (KMSKS) carry the 'KMSKS' region motif. Lysine 271 is an ATP binding site.

Belongs to the class-I aminoacyl-tRNA synthetase family. In terms of assembly, monomer. Zn(2+) is required as a cofactor.

The protein localises to the cytoplasm. It catalyses the reaction tRNA(Cys) + L-cysteine + ATP = L-cysteinyl-tRNA(Cys) + AMP + diphosphate. This is Cysteine--tRNA ligase from Koribacter versatilis (strain Ellin345).